A 518-amino-acid polypeptide reads, in one-letter code: F-box protein At1g47056 (518 aa).

The F-box domain occupies 37–82 (PDYTSSLPDECLALVFQFLNSGNRKRCALVCRRWMIVEGQNRYRLS).

This chain is F-box protein At1g47056, found in Arabidopsis thaliana (Mouse-ear cress).